The following is a 314-amino-acid chain: Glucocorticoid receptor (314 aa).

A disordered region spans residues 1 to 44 (ASAAVSAAPTEKEFPKTHSDVSSEQQNLKGQKGSNGGSMKLHTT). The tract at residues 1–281 (ASAAVSAAPT…SAATGPPPKL (281 aa)) is modulating. A compositionally biased stretch (basic and acidic residues) spans 10-21 (TEKEFPKTHSDV). Phosphoserine occurs at positions 65, 73, and 88. A Glycyl lysine isopeptide (Lys-Gly) (interchain with G-Cter in SUMO2) cross-link involves residue Lys120. At Ser129 the chain carries Phosphoserine. Residues Lys139 and Lys155 each participate in a glycyl lysine isopeptide (Lys-Gly) (interchain with G-Cter in SUMO); alternate cross-link. Residues Lys139 and Lys155 each participate in a glycyl lysine isopeptide (Lys-Gly) (interchain with G-Cter in SUMO2); alternate cross-link. Phosphoserine is present on Ser266. Lys280 participates in a covalent cross-link: Glycyl lysine isopeptide (Lys-Gly) (interchain with G-Cter in ubiquitin). The NR C4-type zinc-finger motif lies at 282–314 (CLVCSDEASGCHYGVLTCGSCKVFFKRAVEGQH). Residues 282–314 (CLVCSDEASGCHYGVLTCGSCKVFFKRAVEGQH) constitute a DNA-binding region (nuclear receptor).

Belongs to the nuclear hormone receptor family. NR3 subfamily. As to quaternary structure, heteromultimeric cytoplasmic complex with HSP90AA1, HSPA1A/HSPA1B, and FKBP5 or another immunophilin such as PPID, STIP1, or the immunophilin homolog PPP5C. Upon ligand binding FKBP5 dissociates from the complex and FKBP4 takes its place, thereby linking the complex to dynein and mediating transport to the nucleus, where the complex dissociates. Probably forms a complex composed of chaperones HSP90 and HSP70, co-chaperones CDC37, PPP5C, TSC1 and client protein TSC2, CDK4, AKT, RAF1 and NR3C1; this complex does not contain co-chaperones STIP1/HOP and PTGES3/p23. Directly interacts with UNC45A. Binds to DNA as a homodimer, and as heterodimer with NR3C2 or the retinoid X receptor. Binds STAT5A and STAT5B homodimers and heterodimers. Interacts with NRIP1, POU2F1, POU2F2 and TRIM28. Interacts with several coactivator complexes, including the SMARCA4 complex, CREBBP/EP300, TADA2L (Ada complex) and p160 coactivators such as NCOA2 and NCOA6. Interaction with BAG1 inhibits transactivation. Interacts with HEXIM1 and TGFB1I1. Interacts with NCOA1. Interacts with NCOA3, SMARCA4, SMARCC1, SMARCD1, and SMARCE1. Interacts with CLOCK, CRY1 and CRY2 in a ligand-dependent fashion. Interacts with CIART. Interacts with RWDD3. Interacts with UBE2I/UBC9 and this interaction is enhanced in the presence of RWDD3. Interacts with GRIP1. Interacts with NR4A3 (via nuclear receptor DNA-binding domain), represses transcription activity of NR4A3 on the POMC promoter Nur response element (NurRE). Directly interacts with PNRC2 to attract and form a complex with UPF1 and DCP1A; the interaction leads to rapid mRNA degradation. Interacts with GSK3B. Interacts with FNIP1 and FNIP2. Interacts (via C-terminus) with HNRNPU (via C-terminus). Interacts with MCM3AP. Interacts (via domain NR LBD) with HSP90AA1 and HSP90AB1. In the absence of hormonal ligand, interacts with TACC1. Interacts (via NR LBD domain) with ZNF764 (via KRAB domain); the interaction regulates transcription factor activity of NR3C1 by directing its actions toward certain biologic pathways. Post-translationally, acetylation by CLOCK reduces its binding to glucocorticoid response elements and its transcriptional activity. In terms of processing, increased proteasome-mediated degradation in response to glucocorticoids. Phosphorylated in the absence of hormone; becomes hyperphosphorylated in the presence of glucocorticoid. The Ser-65, Ser-88 and Ser-266-phosphorylated forms are mainly cytoplasmic, and the Ser-73-phosphorylated form is nuclear. Phosphorylation at Ser-73 increases transcriptional activity. Phosphorylation at Ser-65, Ser-88 and Ser-266 decreases signaling capacity. Phosphorylation at Ser-266 may protect from glucocorticoid-induced apoptosis. Phosphorylation at Ser-65 and Ser-73 is not required in regulation of chromosome segregation. May be dephosphorylated by PPP5C, attenuates NR3C1 action. Post-translationally, ubiquitinated by UBR5, leading to its degradation: UBR5 specifically recognizes and binds ligand-bound NR3C1 when it is not associated with coactivators (NCOAs). In presence of NCOAs, the UBR5-degron is not accessible, preventing its ubiquitination and degradation. In terms of processing, sumoylation at Lys-139 and Lys-155 negatively regulates its transcriptional activity. Heat shock increases sumoylation in a RWDD3-dependent manner.

It localises to the cytoplasm. The protein localises to the nucleus. The protein resides in the mitochondrion. It is found in the cytoskeleton. Its subcellular location is the spindle. It localises to the microtubule organizing center. The protein localises to the centrosome. The protein resides in the chromosome. It is found in the nucleoplasm. Functionally, receptor for glucocorticoids (GC). Has a dual mode of action: as a transcription factor that binds to glucocorticoid response elements (GRE), both for nuclear and mitochondrial DNA, and as a modulator of other transcription factors. Affects inflammatory responses, cellular proliferation and differentiation in target tissues. Involved in chromatin remodeling. Plays a role in rapid mRNA degradation by binding to the 5' UTR of target mRNAs and interacting with PNRC2 in a ligand-dependent manner which recruits the RNA helicase UPF1 and the mRNA-decapping enzyme DCP1A, leading to RNA decay. Could act as a coactivator for STAT5-dependent transcription upon growth hormone (GH) stimulation and could reveal an essential role of hepatic GR in the control of body growth. Mediates glucocorticoid-induced apoptosis. Promotes accurate chromosome segregation during mitosis. May act as a tumor suppressor. May play a negative role in adipogenesis through the regulation of lipolytic and antilipogenic gene expression. The protein is Glucocorticoid receptor (NR3C1) of Ovis aries (Sheep).